We begin with the raw amino-acid sequence, 597 residues long: Exochitinase 1 (597 aa).

A signal peptide (or 32) is located at residues methionine 1–alanine 29. The 82-residue stretch at proline 172 to glycine 253 folds into the Fibronectin type-III domain. Residues histidine 264–glycine 597 enclose the GH18 domain. The Proton donor role is filled by glutamate 384.

This sequence belongs to the glycosyl hydrolase 18 family. Chitinase class II subfamily. The N-terminus is blocked.

It carries out the reaction Random endo-hydrolysis of N-acetyl-beta-D-glucosaminide (1-&gt;4)-beta-linkages in chitin and chitodextrins.. With respect to regulation, inhibited by the pseudosugar allosamidin A. In terms of biological role, exochitinase that generates exclusively chitobiose from chitotetraose, chitohexaose, and colloidal high-molecular mass chitin. The protein is Exochitinase 1 (chi01) of Streptomyces olivaceoviridis (Streptomyces corchorusii).